Reading from the N-terminus, the 1009-residue chain is Anillin-like protein 2 (1009 aa).

3 disordered regions span residues 1-29, 272-295, and 539-558; these read MYRR…DSNR, FGQE…QTIV, and GTGY…PTLV. Residues 542 to 557 show a composition bias toward polar residues; it reads YSASSSGPQFTRSPTL. A coiled-coil region spans residues 626–657; it reads SAADKINDSKRQISKLIETIEKTRKHIQLAEI. Residues 892–1005 enclose the PH domain; sequence DVEYRGFLYL…WLNAINDTLF (114 aa).

As to expression, localizes to the surface of the rachis.

Its function is as follows. Required to maintain the structure of the rachis, the central cytoplasmic core of the syncytial adult gonad. Failure to maintain the rachis leads to premature dissociation of oocytes and thereby impedes oogenesis. The chain is Anillin-like protein 2 (ani-2) from Caenorhabditis elegans.